The primary structure comprises 123 residues: Small ribosomal subunit protein uS12 (123 aa).

Residues 1–29 (MPTINQLIRKKRQSSASRKKSPALQKCPQ) form a disordered region. A compositionally biased stretch (basic residues) spans 8–21 (IRKKRQSSASRKKS). Aspartate 89 bears the 3-methylthioaspartic acid mark.

The protein belongs to the universal ribosomal protein uS12 family. In terms of assembly, part of the 30S ribosomal subunit. Contacts proteins S8 and S17. May interact with IF1 in the 30S initiation complex.

With S4 and S5 plays an important role in translational accuracy. Its function is as follows. Interacts with and stabilizes bases of the 16S rRNA that are involved in tRNA selection in the A site and with the mRNA backbone. Located at the interface of the 30S and 50S subunits, it traverses the body of the 30S subunit contacting proteins on the other side and probably holding the rRNA structure together. The combined cluster of proteins S8, S12 and S17 appears to hold together the shoulder and platform of the 30S subunit. This Chlamydia abortus (strain DSM 27085 / S26/3) (Chlamydophila abortus) protein is Small ribosomal subunit protein uS12.